The chain runs to 70 residues: Peptide BmKn1 (70 aa).

Positions 1-23 (MKSQTFFLLFLVVLLLAISQSEA) are cleaved as a signal peptide. Phe36 carries the phenylalanine amide modification. A propeptide spanning residues 40–70 (SMRDMDTMKYLYDPSLSAADLKTLQKLMENY) is cleaved from the precursor.

The protein belongs to the non-disulfide-bridged peptide (NDBP) superfamily. Short antimicrobial peptide (group 4) family. In terms of tissue distribution, expressed by the venom gland.

Its subcellular location is the secreted. It is found in the target cell membrane. Antibacterial peptide. The sequence is that of Peptide BmKn1 from Olivierus martensii (Manchurian scorpion).